Reading from the N-terminus, the 512-residue chain is ATP synthase subunit alpha (512 aa).

169 to 176 (GDRQTGKT) serves as a coordination point for ATP.

This sequence belongs to the ATPase alpha/beta chains family. As to quaternary structure, F-type ATPases have 2 components, CF(1) - the catalytic core - and CF(0) - the membrane proton channel. CF(1) has five subunits: alpha(3), beta(3), gamma(1), delta(1), epsilon(1). CF(0) has four main subunits: a(1), b(1), b'(1) and c(9-12).

It is found in the cell inner membrane. The catalysed reaction is ATP + H2O + 4 H(+)(in) = ADP + phosphate + 5 H(+)(out). Functionally, produces ATP from ADP in the presence of a proton gradient across the membrane. The alpha chain is a regulatory subunit. In Jannaschia sp. (strain CCS1), this protein is ATP synthase subunit alpha.